The following is a 417-amino-acid chain: Serine hydroxymethyltransferase (417 aa).

An N6-acetyllysine modification is found at Lys54. (6S)-5,6,7,8-tetrahydrofolate-binding positions include Leu121 and 125 to 127 (GHL). Residue Lys229 is modified to N6-(pyridoxal phosphate)lysine. N6-acetyllysine is present on residues Lys250, Lys285, and Lys354. 355-357 (SPF) serves as a coordination point for (6S)-5,6,7,8-tetrahydrofolate. Lys375 bears the N6-acetyllysine mark.

It belongs to the SHMT family. In terms of assembly, homodimer. Requires pyridoxal 5'-phosphate as cofactor.

It localises to the cytoplasm. It carries out the reaction (6R)-5,10-methylene-5,6,7,8-tetrahydrofolate + glycine + H2O = (6S)-5,6,7,8-tetrahydrofolate + L-serine. It functions in the pathway one-carbon metabolism; tetrahydrofolate interconversion. Its pathway is amino-acid biosynthesis; glycine biosynthesis; glycine from L-serine: step 1/1. In terms of biological role, catalyzes the reversible interconversion of serine and glycine with tetrahydrofolate (THF) serving as the one-carbon carrier. This reaction serves as the major source of one-carbon groups required for the biosynthesis of purines, thymidylate, methionine, and other important biomolecules. Also exhibits THF-independent aldolase activity toward beta-hydroxyamino acids, producing glycine and aldehydes, via a retro-aldol mechanism. The chain is Serine hydroxymethyltransferase from Shigella dysenteriae serotype 1 (strain Sd197).